The chain runs to 73 residues: Mucroporin-like peptide (73 aa).

The N-terminal stretch at 1–22 (MKVKCLLAVFLIVLIAAEHCQA) is a signal peptide. Lysine 38 carries the post-translational modification Lysine amide. Positions 44–73 (ELGTQFQPRQKNFMRREVDLERLFAEMPDY) are excised as a propeptide.

Belongs to the non-disulfide-bridged peptide (NDBP) superfamily. Short antimicrobial peptide (group 4) family. As to expression, expressed by the venom gland.

The protein resides in the secreted. It localises to the target cell membrane. Cationic host defense peptide that have antibacterial activity by breaking membranes. Is more effective on Gram-positive than on Gram-negative bacteria. This chain is Mucroporin-like peptide, found in Lychas mucronatus (Chinese swimming scorpion).